Reading from the N-terminus, the 621-residue chain is Glutamine--fructose-6-phosphate aminotransferase [isomerizing] (621 aa).

The active-site Nucleophile; for GATase activity is the Cys2. A Glutamine amidotransferase type-2 domain is found at 2 to 223 (CGIIGYVGEG…DRELGIISIS (222 aa)). 2 consecutive SIS domains span residues 289-436 (LHLE…HKFT) and 470-611 (LSKQ…IDKP). Lys616 acts as the For Fru-6P isomerization activity in catalysis.

As to quaternary structure, homodimer.

The protein resides in the plastid. Its subcellular location is the chloroplast. The enzyme catalyses D-fructose 6-phosphate + L-glutamine = D-glucosamine 6-phosphate + L-glutamate. Functionally, catalyzes the first step in hexosamine metabolism, converting fructose-6P into glucosamine-6P using glutamine as a nitrogen source. The protein is Glutamine--fructose-6-phosphate aminotransferase [isomerizing] of Cyanidium caldarium (Red alga).